We begin with the raw amino-acid sequence, 487 residues long: MTHFIKGQWQAGKGHDVTSSNPANSEIIWRGQTATAEQVNAAVDAAREAQFDWFMLGFDGRLKIVEAYRSQLEANKAELAETIAQETGKPQWETATEVAAMIGKIGLSATAYNKRTGTEANDTPAGRAVLRHKPHGVVAVFGPYNFPGHLPNGHIVPALLAGNTVVFKPSELTPKVAELMVSLWEKAGLPAGVINLVQGEVDTGKALASHPQLDGLFFTGSSRTGHLLHQQYAGHPGKILALEMGGNNPLIIKGVADIKAAVHDILQSAYISSGQRCTCARRLYVEQGEQGDALVAKLVEAVKQIKVGPWNAQPQPFMGSMISEAAAKGMVAAQANLQNLGGVSLVELSHLQAGTGLVSPGLIDVTAVGELPDEEYFGPLLQLVRYSDFDQAIKLANQTRYGLSAGILADSRDDYEYFLARIRAGIVNWNKQITGASGAAPFGGVGASGNHRASAFYAADYCAYPVASVEADAVSLPASLSPGLSLE.

Positions 1-23 (MTHFIKGQWQAGKGHDVTSSNPA) are disordered. 220-225 (GSSRTG) provides a ligand contact to NAD(+). Residues glutamate 243 and cysteine 277 contribute to the active site.

The protein belongs to the aldehyde dehydrogenase family. AstD subfamily.

It carries out the reaction N-succinyl-L-glutamate 5-semialdehyde + NAD(+) + H2O = N-succinyl-L-glutamate + NADH + 2 H(+). The protein operates within amino-acid degradation; L-arginine degradation via AST pathway; L-glutamate and succinate from L-arginine: step 4/5. Functionally, catalyzes the NAD-dependent reduction of succinylglutamate semialdehyde into succinylglutamate. In Shewanella sp. (strain ANA-3), this protein is N-succinylglutamate 5-semialdehyde dehydrogenase.